The chain runs to 314 residues: MKVVAVGGGTGLSTLLKGLKNIDSFEITAVVSVTDEGGSSGKLRKELNVPPPGDVRNNIVALAKDEDLLAKLMSYRFSEGSFKGHSLGNLIIAALTKIEGSFSEAIRILERVLAIKGRVLPVSEDHARLVARFEDGEEVIGETNIVRKGGKIVEVRLDRPIDALPEVLEAIERADIIIFGPGSLYTSIITNVLVNGVKDAIKKSKAKKIYVCNLMTQPGETTGYRVSDHVKELERYLEQSVDFVLVNTRKPSEEVLERYRKEGSDFVEIDAENIQNTILAEPFLVEIVDPSDGQRKIRHDSVKLADVIERISRW.

This sequence belongs to the gluconeogenesis factor family.

It is found in the cytoplasm. Its function is as follows. Required for morphogenesis under gluconeogenic growth conditions. The chain is Putative gluconeogenesis factor from Thermotoga maritima (strain ATCC 43589 / DSM 3109 / JCM 10099 / NBRC 100826 / MSB8).